The following is a 433-amino-acid chain: uncharacterized protein (433 aa).

A coiled-coil region spans residues 258-304 (KNIKSKLLLELRQLKNNITNLQNKITKTMDNVKKIIEEIEQSKNKVT).

This sequence belongs to the mimivirus R160 family.

The protein resides in the virion. This is an uncharacterized protein from Acanthamoeba polyphaga mimivirus (APMV).